The following is a 309-amino-acid chain: Dehydrogenase/reductase SDR family member 7B (309 aa).

Residues 1–5 (MERAL) lie on the Cytoplasmic side of the membrane. The helical; Signal-anchor for type II membrane protein transmembrane segment at 6 to 26 (GVGIGPLAAGTVGLLILLKVI) threads the bilayer. Topologically, residues 27 to 271 (QRLRRRPNIQ…LKAVCQKKKD (245 aa)) are lumenal. Residues serine 47 and leucine 49 each coordinate NAD(+). Serine 179 serves as a coordination point for substrate. Tyrosine 192, lysine 196, and threonine 227 together coordinate NAD(+). The active-site Proton acceptor is the tyrosine 192.

Belongs to the short-chain dehydrogenases/reductases (SDR) family.

The protein localises to the endoplasmic reticulum membrane. In terms of biological role, putative oxidoreductase. This is Dehydrogenase/reductase SDR family member 7B (dhrs7b) from Danio rerio (Zebrafish).